The primary structure comprises 1358 residues: MGNQLAGIAPSQILSVESYFSDIHDFEYDKSLGSTRFFKVARAKHREGLVVVKVFAIQDPTLPLTSYKQELEELKIRLHSAQNCLPFQKAAEKASEKAAMLFRQYVRDNLYDRISTRPFLNNIEKRWIAFQILTAVDQAHKSGVRHGDIKTENVMVTSWNWVLLTDFASFKPTYLPEDNPADFNYFFDTSRRRTCYIAPERFVDGGMFATELEYMRDPSTPLVDLNSNQRTRGELKRAMDIFSAGCVIAELFTEGVPLFDLSQLLAYRNGHFFPEQVLNKIEDRSIRELVTQMIQREPGQRLEADDYLKQQRGNAFPEVFYTFLQPYMAQFAKETFLSADERILVIRKDLGNIIHNLCGHDLPEKAEGESKASGLVVLVSVITSCLQTLKSCDSKLAALELILHLAPRLSVEILLDRITPYLLHFSNNSVPRVRAEALRTLTKVLALVQEVPRNDVNIYPEYILPGIAHLAQDDATIVRLAYAENIALLAETALRFLELVQLKTLNMENEPDSEEVDEATRPNGDYDTELQALHEMVQQKVVTLLSDPENIVKQTLMENGITRLCVFFGRQKANDVLLSHMITFLNDKNDWHLRGAFFDSIVGVAAYVGWQSSSILKPLLQQGLSDAEEFVIVKALNALTCMCQLGLLQKPHVYEFASDIAPFLCHPNLWIRYGAVGFITVVAHQISTADVYCKLMPYLDPYITQPVIQIERKLVLLSVLKEPVSRSIFDYALRSKDIASLFRHLHMRQKKRNGSLLDCPPPEDPAIAQLLKKLLSQGMTEEEEDKLLALKDFMMKSNRAKANAVDQSHLHDSSQKGVIDLAALGITGRQVDLVKTKQEPDEKRARKHVKQDSNVNEEWKSMFGSLEPPNIPQALPKTSDHEVVPTGKSPRSESSAGVCVPLSTSPQVSEAAHIPSKKPVIPVVSSTVLPSTYQIRITTCKTELQQLIQQKREQCNAERIAKQMMENAEWESKPPPPGWRPKGLLVAHLHEHKSAVNRIRVSDEHLLFATCSNDGTVKIWNSQKMEGKTTTTRSILTYSRIGGRVKTLTFCQGSHYLAIASDNGAVQLLGIEASKLPKSPKIHPLQSRILDQKEDGCVVDMHHFNSGAQSVLAYATVNGSLVGWDLRSSSNAWTLKHDLKSGLITSFAVDIHQCWLCIGTSSGAMACWDMRFQLPISSHCHPSRARIRRLSMHPLYQSWVIAAVQGNNEVSMWDMETGDRRLTLWASSAPPLSELQPSPHSVHGIYCSPADGNPILLTAGSDMKIRFWDLVSPERSYVVAGSTGSPSVSYYKKIIEGTEVVQEIQNKQKVGPSDDTPRRGPESLPVGHHDIITDIATFQTTQGFIVTASRDGIVKVWK.

Glycine 2 carries the N-myristoyl glycine lipid modification. The region spanning 26 to 324 is the Protein kinase domain; the sequence is FEYDKSLGST…AFPEVFYTFL (299 aa). ATP is bound by residues 32-40 and lysine 53; that span reads LGSTRFFKV. Aspartate 148 functions as the Proton acceptor in the catalytic mechanism. 4 HEAT repeats span residues 413–450, 458–495, 572–610, and 612–648; these read ILLD…LVQE, IYPE…TALR, KAND…YVGW, and SSSI…LGLL. Residues serine 808, serine 813, serine 853, and serine 865 each carry the phosphoserine modification. The segment at 875–899 is disordered; that stretch reads LPKTSDHEVVPTGKSPRSESSAGVC. 6 WD repeats span residues 991-1030, 1040-1079, 1093-1134, 1139-1178, 1182-1223, and 1237-1278; these read EHKS…GKTT, RIGG…LPKS, KEDG…NAWT, LKSG…PISS, PSRA…RRLT, and PSPH…RSYV. The interval 1307 to 1326 is disordered; it reads KQKVGPSDDTPRRGPESLPV. A compositionally biased stretch (basic and acidic residues) spans 1315-1326; that stretch reads DTPRRGPESLPV. Threonine 1316 carries the phosphothreonine modification. Residues 1327–1358 form a WD 7 repeat; it reads GHHDIITDIATFQTTQGFIVTASRDGIVKVWK.

Belongs to the protein kinase superfamily. Ser/Thr protein kinase family. Component of the PI3K (PI3KC3/PI3K-III/class III phosphatidylinositol 3-kinase) complex the core of which is composed of the catalytic subunit PIK3C3, the regulatory subunit PIK3R4 and BECN1 associating with additional regulatory/auxiliary subunits to form alternative complex forms. Alternative complex forms containing a fourth regulatory subunit in a mutually exclusive manner are PI3K complex I (PI3KC3-C1) containing ATG14, and PI3K complex II (PI3KC3-C2) containing UVRAG. PI3KC3-C1 displays a V-shaped architecture with PIK3R4 serving as a bridge between PIK3C3 and the ATG14:BECN1 subcomplex. Both, PI3KC3-C1 and PI3KC3-C2, can associate with further regulatory subunits, such as RUBCN, SH3GLB1/Bif-1, AMBRA1 and NRBF2. PI3KC3-C1 probably associates with PIK3CB. Interacts with RAB7A in the presence of PIK3C3/VPS34. Interacts with NRBF2. Interacts with ARMC3. It depends on Mn(2+) as a cofactor. Myristoylated. In terms of processing, probably autophosphorylated.

Its subcellular location is the late endosome. The protein localises to the cytoplasmic vesicle. The protein resides in the autophagosome. It localises to the membrane. The enzyme catalyses L-seryl-[protein] + ATP = O-phospho-L-seryl-[protein] + ADP + H(+). It carries out the reaction L-threonyl-[protein] + ATP = O-phospho-L-threonyl-[protein] + ADP + H(+). Regulatory subunit of the PI3K complex that mediates formation of phosphatidylinositol 3-phosphate; different complex forms are believed to play a role in multiple membrane trafficking pathways: PI3KC3-C1 is involved in initiation of autophagosomes and PI3KC3-C2 in maturation of autophagosomes and endocytosis. Involved in regulation of degradative endocytic trafficking and cytokinesis, probably in the context of PI3KC3-C2. The sequence is that of Phosphoinositide 3-kinase regulatory subunit 4 (Pik3r4) from Rattus norvegicus (Rat).